Reading from the N-terminus, the 637-residue chain is Conglutin beta 5 (637 aa).

Residues 1-30 (MAKMRVRFPMLVLLLGVVFLLAVSIGIAYG) form the signal peptide. Basic and acidic residues-rich tracts occupy residues 33–105 (DVIK…REQE), 136–174 (RREE…REQE), and 184–203 (DYGR…REQE). Disordered regions lie at residues 33–221 (DVIK…YFSS) and 384–439 (EQED…LRSN). The 159-residue stretch at 217–375 (YYFSSERFQT…TFNTHYEEIQ (159 aa)) folds into the Cupin type-1 1 domain. The span at 389–417 (EQRREQEQSHQDEGVIVRVSKEQIQELRK) shows a compositional bias: basic and acidic residues. A Cupin type-1 2 domain is found at 434-594 (FNLRSNEPIY…IFPGSAEDVE (161 aa)). The N-linked (GlcNAc...) asparagine glycan is linked to Asn544. Residues 606 to 615 (ANAQPQQQQQ) show a composition bias toward low complexity. The interval 606-626 (ANAQPQQQQQQREKEGRRGRR) is disordered.

This sequence belongs to the 7S seed storage protein family. In terms of assembly, component of globulins complexes which accumulate in seeds.

Functionally, seed storage protein. Accumulates during seed development and is hydrolyzed after germination to provide a carbon and nitrogen source for the developing seedling. This is Conglutin beta 5 from Lupinus angustifolius (Narrow-leaved blue lupine).